The sequence spans 47 residues: Defensin-2 (47 aa).

Cystine bridges form between C3-C47, C14-C35, C20-C41, and C24-C43.

It belongs to the DEFL family. Epidermis and vascular bundles of pods, stems, roots, leaves and wet or dry seeds.

In terms of biological role, possesses antifungal activity sensitive to inorganic cations. The polypeptide is Defensin-2 (Pisum sativum (Garden pea)).